The primary structure comprises 69 residues: uncharacterized protein (69 aa).

A helical membrane pass occupies residues 32–54 (MLGAIDVAVAVASVPTLFVVTAI).

The protein resides in the membrane. This is an uncharacterized protein from Sinorhizobium fredii (strain NBRC 101917 / NGR234).